A 336-amino-acid chain; its full sequence is MSRKPCCVGEGLKKGAWTAEEDKKLISYIHEHGEGGWRDIPQKAGLKRCGKSCRLRWANYLKPDIKRGEFSYEEEQIIIMLHASRGNKWSVIARHLPKRTDNEIKNYWNTHLKKLLIDKGIDPVTHKPLAYDSNPDEQSQSGSISPKSLPPSSSKNVPEITSSDETPKYDASLSSKKRCFKRSSSTSKLLNKVAARASSMGTILGASIEGTLISSTPLSSCLNDDFSETSQFQMEEFDPFYQSSEHIIDHMKEDISINNSEYDFSQFLEQFSNNEGEEADNTGGGYNQDLLMSDVSSTSVDEDEMMQNITGWSNYLLDHSDFNYDTSQDYDDKNFI.

2 consecutive HTH myb-type domains span residues Gly-9–Ile-65 and Lys-66–Leu-116. 2 DNA-binding regions (H-T-H motif) span residues Trp-37 to Leu-61 and Trp-89 to Leu-112. A disordered region spans residues Lys-127–Asp-170. The span at Ser-141–Ser-154 shows a compositional bias: low complexity. The span at Lys-155–Asp-164 shows a compositional bias: polar residues.

In terms of assembly, can form complexes with MYC2, MYC3 or MYC4. Expressed in both vegetative and generative organs. Mostly present in seedlings, inflorescences, roots and stems, and, to a lower extent, in leaves (in midvein and trichomes) and siliques.

The protein localises to the nucleus. In terms of biological role, plays a minor rheostat role in aliphatic glucosinolates (GLSs) biosynthesis, mostly short chained. Together with MYB28/HAG1 and MYB76/HAG2, promotes aliphatic glucosinolate biosynthesis but represses indolic glucosinolate biosynthesis. Prevents insect performance (e.g. lepidopteran insect Mamestra brassicae) by promoting glucosinolates. The protein is Transcription factor MYB29 (MYB29) of Arabidopsis thaliana (Mouse-ear cress).